The chain runs to 153 residues: Ribonuclease H (153 aa).

The region spanning 1 to 141 (MKHVHIFTDG…ADELARKGME (141 aa)) is the RNase H type-1 domain. Mg(2+)-binding residues include D9, E47, D69, and D133. A disordered region spans residues 123 to 153 (HAGHPENERADELARKGMEPFKKARRADAVK). Basic and acidic residues predominate over residues 125–153 (GHPENERADELARKGMEPFKKARRADAVK).

Belongs to the RNase H family. As to quaternary structure, monomer. Mg(2+) is required as a cofactor.

It localises to the cytoplasm. The enzyme catalyses Endonucleolytic cleavage to 5'-phosphomonoester.. Endonuclease that specifically degrades the RNA of RNA-DNA hybrids. This chain is Ribonuclease H, found in Rhizobium meliloti (strain 1021) (Ensifer meliloti).